Reading from the N-terminus, the 107-residue chain is Thioredoxin (107 aa).

A Thioredoxin domain is found at 2–107; it reads VVHIENLNAF…TLKQKINDHK (106 aa). Residues Cys-32 and Cys-35 each act as nucleophile in the active site. A disulfide bridge connects residues Cys-32 and Cys-35. Cys-71 and Cys-75 each carry S-nitrosocysteine.

This sequence belongs to the thioredoxin family. Post-translationally, may be nitrosylated on several cysteine residues, depending on the oxidation state. Nitrosylated Cys-75 may serve as donor for nitrosylation of target proteins.

It localises to the nucleus. Its subcellular location is the cytoplasm. The protein resides in the secreted. Functionally, participates in various redox reactions through the reversible oxidation of its active center dithiol to a disulfide and catalyzes dithiol-disulfide exchange reactions. Plays a role in the reversible S-nitrosylation of cysteine residues in target proteins, and thereby contributes to the response to intracellular nitric oxide. Nitrosylates the active site Cys of CASP3 in response to nitric oxide (NO), and thereby inhibits caspase-3 activity. Induces the FOS/JUN AP-1 DNA binding activity in ionizing radiation (IR) cells through its oxidation/reduction status and stimulates AP-1 transcriptional activity. This is Thioredoxin (txn) from Ictalurus punctatus (Channel catfish).